The following is a 1382-amino-acid chain: Histone-lysine N-methyltransferase SUVR5 (1382 aa).

Disordered regions lie at residues 43–62 (TVTG…SEPK) and 354–373 (GNTN…NTPE). C2H2-type zinc fingers lie at residues 735–758 (FACA…EERH), 769–792 (LQCI…QAVH), and 838–861 (FVCK…QAEH). The disordered stretch occupies residues 915-935 (RRMQGSKSLGTEGNTEAGVSP). Residues 919–928 (GSKSLGTEGN) are compositionally biased toward polar residues. The region spanning 1145–1221 (LRCSCRSSVC…TCQNRVLQNG (77 aa)) is the Pre-SET domain. C1147, C1149, C1154, C1159, C1182, C1203, C1207, C1209, and C1213 together coordinate Zn(2+). The SET domain maps to 1224–1356 (AKLEVFRTES…AGEEITRDYG (133 aa)). Residues 1234–1236 (KGW), Y1277, and 1313–1314 (NH) contribute to the S-adenosyl-L-methionine site. C1316 contributes to the Zn(2+) binding site. Y1355 is a binding site for S-adenosyl-L-methionine. In terms of domain architecture, Post-SET spans 1366–1382 (NEHPCHCKATNCRGLLS). Zn(2+)-binding residues include C1370, C1372, and C1377.

This sequence belongs to the class V-like SAM-binding methyltransferase superfamily. In terms of assembly, component of a regulatory complex with LDL1/SWP1. Interacts with LDL1/SWP1.

The protein localises to the nucleus. It localises to the chromosome. It catalyses the reaction L-lysyl-[histone] + S-adenosyl-L-methionine = N(6)-methyl-L-lysyl-[histone] + S-adenosyl-L-homocysteine + H(+). Functionally, histone methyltransferase that functions together with its binding partner LDL1/SWP1 as one of the regulators of flower timing in Arabidopsis. Mediates H3K9me2 deposition and regulates gene expression in a DNA methylation-independent manner. Binds DNA through its zinc fingers and represses the expression of a subset of stimulus response genes. May represent a novel mechanism for plants to regulate their chromatin and transcriptional state, which may allow for the adaptability and modulation necessary to rapidly respond to environment or developmental cues. This chain is Histone-lysine N-methyltransferase SUVR5, found in Arabidopsis thaliana (Mouse-ear cress).